A 394-amino-acid chain; its full sequence is MAKEKFERSKPHVNVGTIGHVDHGKTTLTAAITKVMAEKNGGMARKFDEIDSAPEEKARGITINTSHVEYESPNRHYAHVDCPGHADYVKNMITGAAQMDGAILVCSAADGPMPQTREHILLSRQVGVPKIVVFLNKCDMVDDEELLELVEMEVRELLDQYEFPGDDTPVIMGSALRAIEGDEAYVEKIVELVQAMDDYIPAPERDTEKPFILPIEDVFSISGRGTVVTGRIERGVVNIGDEVEVVGIRPTQKTTVTGVEMFRKLLDRGEAGDNVGILVRGLKRDDVERGQVLCKPGSIKPHTKFEAEVYVLSKEEGGRHTPFFKGYRPQFYFRTTDITGAVELPEGVEMVMPGDNVKMTITLINPIAMDEGLRFAIREGGRTVGAGVVAKIIE.

In terms of domain architecture, tr-type G spans 10–204 (KPHVNVGTIG…AMDDYIPAPE (195 aa)). Positions 19 to 26 (GHVDHGKT) are G1. 19 to 26 (GHVDHGKT) contacts GTP. T26 is a Mg(2+) binding site. Residues 60-64 (GITIN) form a G2 region. The interval 81–84 (DCPG) is G3. GTP contacts are provided by residues 81–85 (DCPGH) and 136–139 (NKCD). Positions 136-139 (NKCD) are G4. A G5 region spans residues 174–176 (SAL).

It belongs to the TRAFAC class translation factor GTPase superfamily. Classic translation factor GTPase family. EF-Tu/EF-1A subfamily. As to quaternary structure, monomer.

The protein resides in the cytoplasm. The catalysed reaction is GTP + H2O = GDP + phosphate + H(+). In terms of biological role, GTP hydrolase that promotes the GTP-dependent binding of aminoacyl-tRNA to the A-site of ribosomes during protein biosynthesis. The sequence is that of Elongation factor Tu from Francisella tularensis subsp. tularensis (strain FSC 198).